We begin with the raw amino-acid sequence, 569 residues long: MLO-like protein 10 (569 aa).

Residues 1-41 lie on the Extracellular side of the membrane; the sequence is MATRCFWCWTTLLFCSQLLTGFARASSAGGAKEKGLSQTPT. The chain crosses the membrane as a helical span at residues 42–62; sequence WAVALVCTFFILVSVLLEKAL. At 63–85 the chain is on the cytoplasmic side; that stretch reads HRVATWLWEKHKNSLLEALEKIK. Residues 86-106 form a helical membrane-spanning segment; the sequence is AELMILGFISLLLTFGEQYIL. Over 107 to 163 the chain is Extracellular; sequence KICIPEKAAASMLPCPAPSTHDQDKTHRRRLAAATTSSRCDEGHEPLIPATGLHQLH. The helical transmembrane segment at 164–184 threads the bilayer; sequence ILLFFMAAFHILYSFITMMLG. The Cytoplasmic portion of the chain corresponds to 185–286; that stretch reads RLKIRGWKKW…IKRSLEDDFK (102 aa). The chain crosses the membrane as a helical span at residues 287–307; sequence VVVGISPLLWASFVIFLLLNV. A topological domain (extracellular) is located at residue N308. The helical transmembrane segment at 309 to 329 threads the bilayer; that stretch reads GWEALFWASILPVLIILAVST. Residues 330–372 are Cytoplasmic-facing; the sequence is KLQAILTRMALGITERHAVVQGIPLVHGSDKYFWFNRPQLLLH. A helical transmembrane segment spans residues 373-393; that stretch reads LLHFALFQNAFQLTYFFWVWY. Topologically, residues 394–413 are extracellular; it reads SFGLKSCFHTDFKLVIVKLS. A helical transmembrane segment spans residues 414-434; sequence LGVGALILCSYITLPLYALVT. Over 435-569 the chain is Cytoplasmic; the sequence is QMGSNMKKAV…VKNVPANDID (135 aa). Residues 447 to 468 form a calmodulin-binding region; sequence EQMAKALKKWHMTVKKKKGKAR.

The protein belongs to the MLO family.

Its subcellular location is the membrane. In terms of biological role, may be involved in modulation of pathogen defense and leaf cell death. Activity seems to be regulated by Ca(2+)-dependent calmodulin binding and seems not to require heterotrimeric G proteins. The chain is MLO-like protein 10 (MLO10) from Arabidopsis thaliana (Mouse-ear cress).